Consider the following 288-residue polypeptide: MSQFSFTKMHGLGNSYIYVNMFEEHIPEEELALVAEKVSNRNTGIGADGMILICPSEVAPVKMRMFNNDGSEGKSCGNGLRCVAKYAYEHKLVEETIFTIETLAGIVTAEVTVENDIVTLVKIDMGAPRLTRAELPMLGEGETPFIREDFLFHNQRYAFTAVSMGNPHAVIFVDDVEKAPLTTLGPVLENHEMFPERVNVEFIEILNETEMNFRVWERGSGVTQACGTGACASVVAAILNGKMERGKEITVHLAGGDLMITWTEEGTVMMKGPAEVICHGVYEYKIEA.

Substrate-binding residues include Asn-14 and Asn-67. Cys-76 (proton donor) is an active-site residue. Substrate-binding positions include 77–78 (GN), Asn-166, Asn-199, and 217–218 (ER). Cys-226 functions as the Proton acceptor in the catalytic mechanism. A substrate-binding site is contributed by 227-228 (GT).

It belongs to the diaminopimelate epimerase family. Homodimer.

It is found in the cytoplasm. It carries out the reaction (2S,6S)-2,6-diaminopimelate = meso-2,6-diaminopimelate. Its pathway is amino-acid biosynthesis; L-lysine biosynthesis via DAP pathway; DL-2,6-diaminopimelate from LL-2,6-diaminopimelate: step 1/1. Its function is as follows. Catalyzes the stereoinversion of LL-2,6-diaminopimelate (L,L-DAP) to meso-diaminopimelate (meso-DAP), a precursor of L-lysine and an essential component of the bacterial peptidoglycan. This Bacillus cytotoxicus (strain DSM 22905 / CIP 110041 / 391-98 / NVH 391-98) protein is Diaminopimelate epimerase.